Consider the following 514-residue polypeptide: ATP synthase subunit alpha (514 aa).

170–177 (GDRQIGKT) provides a ligand contact to ATP.

It belongs to the ATPase alpha/beta chains family. As to quaternary structure, F-type ATPases have 2 components, CF(1) - the catalytic core - and CF(0) - the membrane proton channel. CF(1) has five subunits: alpha(3), beta(3), gamma(1), delta(1), epsilon(1). CF(0) has three main subunits: a(1), b(2) and c(9-12). The alpha and beta chains form an alternating ring which encloses part of the gamma chain. CF(1) is attached to CF(0) by a central stalk formed by the gamma and epsilon chains, while a peripheral stalk is formed by the delta and b chains.

The protein localises to the cell inner membrane. The catalysed reaction is ATP + H2O + 4 H(+)(in) = ADP + phosphate + 5 H(+)(out). Functionally, produces ATP from ADP in the presence of a proton gradient across the membrane. The alpha chain is a regulatory subunit. In Pseudomonas fluorescens (strain Pf0-1), this protein is ATP synthase subunit alpha.